Consider the following 396-residue polypeptide: Tryptophan synthase beta chain (396 aa).

Lys-86 carries the post-translational modification N6-(pyridoxal phosphate)lysine.

This sequence belongs to the TrpB family. As to quaternary structure, tetramer of two alpha and two beta chains. Pyridoxal 5'-phosphate serves as cofactor.

It carries out the reaction (1S,2R)-1-C-(indol-3-yl)glycerol 3-phosphate + L-serine = D-glyceraldehyde 3-phosphate + L-tryptophan + H2O. The protein operates within amino-acid biosynthesis; L-tryptophan biosynthesis; L-tryptophan from chorismate: step 5/5. Its function is as follows. The beta subunit is responsible for the synthesis of L-tryptophan from indole and L-serine. In Aliivibrio fischeri (strain MJ11) (Vibrio fischeri), this protein is Tryptophan synthase beta chain.